Reading from the N-terminus, the 269-residue chain is Tryptophan synthase alpha chain (269 aa).

Catalysis depends on proton acceptor residues glutamate 49 and aspartate 60.

The protein belongs to the TrpA family. As to quaternary structure, tetramer of two alpha and two beta chains.

It catalyses the reaction (1S,2R)-1-C-(indol-3-yl)glycerol 3-phosphate + L-serine = D-glyceraldehyde 3-phosphate + L-tryptophan + H2O. It functions in the pathway amino-acid biosynthesis; L-tryptophan biosynthesis; L-tryptophan from chorismate: step 5/5. Its function is as follows. The alpha subunit is responsible for the aldol cleavage of indoleglycerol phosphate to indole and glyceraldehyde 3-phosphate. This chain is Tryptophan synthase alpha chain, found in Pseudomonas putida (Arthrobacter siderocapsulatus).